The sequence spans 331 residues: MKAYAVPFEKYVNLADARLGTRAISVTDDWFADVNRLFQPTPAVWKEGVFDDNGKWMDGWESRRKRFEGYDHAVIRLGVPGWIKGVDIDTSFFTGNYPPSASLEACFVADGDPSDATVWTEILPAVELKGNSHHYHEIAFDKPVSHLRFNIYPDGGVARLRVHGIPYRDWSSVGHNEQVDLAAALNGGRALACSDEHFGRMSNILNPNRGENMGDGWETARRRTPGNDWVIVALGHPGEIERVVVDTLHFKGNYPDSCSIQAAYVKGGTDSQIETQSLFWRELLPSQKLSMHAEHEFAGQIAKLGPVTHVRLNIFPDGGVSRLRLFGKVVK.

This sequence belongs to the allantoicase family.

The catalysed reaction is allantoate + H2O = (S)-ureidoglycolate + urea. Its pathway is nitrogen metabolism; (S)-allantoin degradation; (S)-ureidoglycolate from allantoate (aminidohydrolase route): step 1/1. This Stutzerimonas stutzeri (strain A1501) (Pseudomonas stutzeri) protein is Probable allantoicase.